A 683-amino-acid chain; its full sequence is uncharacterized protein (683 aa).

2 stretches are compositionally biased toward polar residues: residues 407–420 and 512–529; these read FETSTNKSSPTYTP and EGSSPKPQTTAAKTSSEA. Disordered regions lie at residues 407-427, 509-556, and 621-648; these read FETSTNKSSPTYTPTPAKLST, FSRE…SSTV, and HNTSMPNPHHNSVKPEDHPHHPEGDHPD. A compositionally biased stretch (low complexity) spans 531–542; the sequence is LPPLLTTTPTPT. 2 stretches are compositionally biased toward polar residues: residues 543–556 and 621–630; these read NTEKSQSTFASSTV and HNTSMPNPHH. Positions 633-648 are enriched in basic and acidic residues; the sequence is VKPEDHPHHPEGDHPD. Residues 657-677 traverse the membrane as a helical segment; sequence IWLLPIAGTIFALVALVIVNI.

It is found in the host membrane. This is an uncharacterized protein from Alcelaphine herpesvirus 1 (strain C500) (AlHV-1).